A 412-amino-acid polypeptide reads, in one-letter code: 4-hydroxy-3-methylbut-2-en-1-yl diphosphate synthase (ferredoxin) (412 aa).

A compositionally biased stretch (polar residues) spans 1-12 (MQTLDRPNAPSQ). The interval 1 to 22 (MQTLDRPNAPSQQPYPEPVYPR) is disordered. [4Fe-4S] cluster-binding residues include cysteine 314, cysteine 317, cysteine 348, and glutamate 355.

It belongs to the IspG family. [4Fe-4S] cluster is required as a cofactor.

The catalysed reaction is (2E)-4-hydroxy-3-methylbut-2-enyl diphosphate + 2 oxidized [2Fe-2S]-[ferredoxin] + H2O = 2-C-methyl-D-erythritol 2,4-cyclic diphosphate + 2 reduced [2Fe-2S]-[ferredoxin] + H(+). It functions in the pathway isoprenoid biosynthesis; isopentenyl diphosphate biosynthesis via DXP pathway; isopentenyl diphosphate from 1-deoxy-D-xylulose 5-phosphate: step 5/6. Functionally, converts 2C-methyl-D-erythritol 2,4-cyclodiphosphate (ME-2,4cPP) into 1-hydroxy-2-methyl-2-(E)-butenyl 4-diphosphate. The polypeptide is 4-hydroxy-3-methylbut-2-en-1-yl diphosphate synthase (ferredoxin) (Synechococcus sp. (strain JA-3-3Ab) (Cyanobacteria bacterium Yellowstone A-Prime)).